The chain runs to 298 residues: Nucleotide-binding protein GK3066 (298 aa).

Residue 17 to 24 (GMSGAGKT) participates in ATP binding. 68–71 (DLRS) contacts GTP.

The protein belongs to the RapZ-like family.

Functionally, displays ATPase and GTPase activities. The protein is Nucleotide-binding protein GK3066 of Geobacillus kaustophilus (strain HTA426).